Reading from the N-terminus, the 363-residue chain is Neurogenic differentiation factor 2 (363 aa).

A disordered region spans residues methionine 1–glutamate 116. The span at glutamate 28–aspartate 44 shows a compositional bias: basic and acidic residues. Acidic residues predominate over residues alanine 64–aspartate 83. A compositionally biased stretch (basic residues) spans proline 87–threonine 98. Positions lysine 93–proline 99 match the Nuclear localization signal motif. A bHLH domain is found at valine 107–leucine 159.

Efficient DNA binding requires dimerization with another bHLH protein. In adult, expressed strongly in brain and more weakly in skin, muscle, eye and ovary.

The protein resides in the nucleus. In terms of biological role, transcriptional regulator. Appears to mediate neuronal differentiation. The sequence is that of Neurogenic differentiation factor 2 from Danio rerio (Zebrafish).